The chain runs to 570 residues: MSTRISRSVYADMFGPTTGDRVRLADTDLIIEVEKDYTTYGEEVKFGGGKVIRDGMGQSQVTNKDGAADTVITNAVVVDHWGIVKADVAIKAGMIHAIGKAGNPDIQPNVDIIIGPGTDIIAGEGKILTAGGFDSHIHFICPQQIEHALMSGVTTMLGGGTGPSHGTFATTCTPGPWHIGRMIQSFDAFPVNLGISGKGNAALPGALIEMVEGGACALKLHEDWGTTPAAIDNCLTVADDHDVQVMIHSDTLNESGFVEDTIKAFKGRTIHAFHTEGAGGGHAPDIIKVAGLANVLPSSTNPTRPFTRNTIDEHLDMLMVCHHLDPSIAEDLAFAESRIRKETIAAEDILHDLGALSMMSSDSQAMGRLGEVIIRTWQTADKMKKQRGSLPQDSSRNDNFRVKRYIAKYTINPSIAHGVSKLIGSVETGKMADLVLWSPAFFGVKPDCIIKAGMIVAAPMGDPNASIPTPQPVHYQPMFGAYGRALTASSVVFTSQAAAAGPLARDLGIAKALYPVSNVRGGISKKSMIHNDATPTIEVDPETYEVRADGELLTCAPAEVLPMAQRYFMY.

The 440-residue stretch at 131–570 (GGFDSHIHFI…LPMAQRYFMY (440 aa)) folds into the Urease domain. The Ni(2+) site is built by H136, H138, and K219. Position 219 is an N6-carboxylysine (K219). Residue H221 coordinates substrate. H248 and H274 together coordinate Ni(2+). The active-site Proton donor is H322. Ni(2+) is bound at residue D362.

Belongs to the metallo-dependent hydrolases superfamily. Urease alpha subunit family. In terms of assembly, heterotrimer of UreA (gamma), UreB (beta) and UreC (alpha) subunits. Three heterotrimers associate to form the active enzyme. Requires Ni cation as cofactor. Carboxylation allows a single lysine to coordinate two nickel ions.

The protein localises to the cytoplasm. It carries out the reaction urea + 2 H2O + H(+) = hydrogencarbonate + 2 NH4(+). It functions in the pathway nitrogen metabolism; urea degradation; CO(2) and NH(3) from urea (urease route): step 1/1. This Rhodopseudomonas palustris (strain HaA2) protein is Urease subunit alpha.